The chain runs to 783 residues: Cation/H(+) antiporter 11 (783 aa).

Helical transmembrane passes span 31–51 (VVFG…FFCI), 61–81 (IGVS…PQLF), 101–120 (AALR…LMTV), 135–155 (VVIG…LNLF), 175–195 (VIVI…LLEL), 205–225 (LALS…IVAT), 244–264 (AVII…QWII), 276–295 (IYIH…FVFF), 300–322 (VLGP…ALEA), 360–380 (IFLT…LCLY), 389–409 (LAVS…YEAV), and 418–438 (ATYA…PMVV).

Belongs to the monovalent cation:proton antiporter 2 (CPA2) transporter (TC 2.A.37) family. CHX (TC 2.A.37.4) subfamily. As to expression, specifically expressed in pollen.

The protein resides in the membrane. In terms of biological role, may operate as a cation/H(+) antiporter. This is Cation/H(+) antiporter 11 (CHX11) from Arabidopsis thaliana (Mouse-ear cress).